The primary structure comprises 156 residues: Small ribosomal subunit protein uS7 (156 aa).

The protein belongs to the universal ribosomal protein uS7 family. In terms of assembly, part of the 30S ribosomal subunit. Contacts proteins S9 and S11.

Functionally, one of the primary rRNA binding proteins, it binds directly to 16S rRNA where it nucleates assembly of the head domain of the 30S subunit. Is located at the subunit interface close to the decoding center, probably blocks exit of the E-site tRNA. This Carsonella ruddii protein is Small ribosomal subunit protein uS7.